The primary structure comprises 247 residues: STING ER exit protein (247 aa).

Position 127 is a phosphoserine (Ser-127). Residues 195–216 are a coiled coil; the sequence is EAREIADSYANNARIIEKQLQR. Positions 215-247 are disordered; it reads QRKGGKLSDVGIKTKTEDAPPPQKKQRGTLLER.

Belongs to the STEEP1 family.

Functionally, molecular adapter that stimulates membrane curvature formation and subsequent endoplasmic reticulum exit site (ERES) establishment by recruiting PI3K complex I, leading to COPII vesicle-mediated transport. In Drosophila melanogaster (Fruit fly), this protein is STING ER exit protein.